The primary structure comprises 141 residues: Large ribosomal subunit protein uL11 (141 aa).

The protein belongs to the universal ribosomal protein uL11 family. Part of the ribosomal stalk of the 50S ribosomal subunit. Interacts with L10 and the large rRNA to form the base of the stalk. L10 forms an elongated spine to which L12 dimers bind in a sequential fashion forming a multimeric L10(L12)X complex. In terms of processing, one or more lysine residues are methylated.

In terms of biological role, forms part of the ribosomal stalk which helps the ribosome interact with GTP-bound translation factors. The chain is Large ribosomal subunit protein uL11 from Nitratiruptor sp. (strain SB155-2).